The sequence spans 512 residues: NAD(P)H-quinone oxidoreductase chain 4, chloroplastic (512 aa).

14 helical membrane passes run 4–24, 34–54, 87–107, 111–131, 134–154, 167–187, 208–228, 242–262, 274–294, 308–328, 330–350, 374–396, 417–437, and 462–482; these read VPWL…IPLL, WYAL…FGCY, IGLI…AWPV, PKLF…LFAS, ILLF…LLSM, FILY…TASL, GLEI…LPAF, HYST…YGFI, TVFA…AALV, SSVS…DLGL, GAML…FLAG, MFAM…GFVS, IITL…LSMV, and VFVL…PNFA.

It belongs to the complex I subunit 4 family.

It localises to the plastid. The protein resides in the chloroplast thylakoid membrane. The catalysed reaction is a plastoquinone + NADH + (n+1) H(+)(in) = a plastoquinol + NAD(+) + n H(+)(out). It catalyses the reaction a plastoquinone + NADPH + (n+1) H(+)(in) = a plastoquinol + NADP(+) + n H(+)(out). This Zygnema circumcarinatum (Green alga) protein is NAD(P)H-quinone oxidoreductase chain 4, chloroplastic.